Here is a 31-residue protein sequence, read N- to C-terminus: Aspartate racemase (31 aa).

The disordered stretch occupies residues 1–31 (PVAPEYLFKKEEDKGANKEEEEVAPELGIRA). Residues 7–18 (LFKKEEDKGANK) show a composition bias toward basic and acidic residues.

This sequence belongs to the aspartate/glutamate racemases family. The cofactor is pyridoxal 5'-phosphate.

The catalysed reaction is L-aspartate = D-aspartate. With respect to regulation, inhibited by hydroxylamine, aminooxyacetate, phenylhydrazine and sodium borohydride. In terms of biological role, highly specific toward aspartate and entirely inactive on glutamate, alanine and serine. The polypeptide is Aspartate racemase (Anadara broughtonii (Blood clam)).